We begin with the raw amino-acid sequence, 244 residues long: S-adenosyl-L-methionine-dependent Diels-Alderase iliD (244 aa).

It belongs to the class I-like SAM-binding methyltransferase superfamily. Erg6/SMT family. S-adenosyl-L-methionine serves as cofactor.

It carries out the reaction 3-[(2E,4E,8S,10E,12Z)-4,8-dimethyltetradeca-2,4,10,12-tetraenoyl]-4-hydroxy-5-(4-hydroxyphenyl)-1,2-dihydropyridin-2-one = ilicicolin H. It participates in mycotoxin biosynthesis. In terms of biological role, S-adenosyl-l-methionine-dependent Diels-Alderase; part of the gene cluster that mediates the biosynthesis of ilicicolin H, a 4-hydroxy-2-pyridonealkaloid that has potent and broad antifungal activities by inhibiting the mitochondrial respiration chain. IliD catalyzes the Diels-Alder reaction that converts the acyclic 2-pyridone intermediate to 8-epi-ilicicolin H. The biosynthesis of ilicicolin H starts with formation of the tetramic acid by the hybrid PKS-NRPS synthetase iliA with the partnering trans-enoyl reductase iliB since iliA lacks a designated enoylreductase (ER) domain. The cytochrome P450 monooxygenase iliC then catalyzes the ring expansion of the tetramate to the acyclic 2-pyridone. The pericyclase iliD further converts the acyclic 2-pyridone into 8-epi-ilicicolin H. 8-epi-ilicicolin H might then spontaneously convert to ilicicolin H since ilicicolin H is produced in the absence of the epimerase iliE, in contrast to what was observed for the Talaromyces variabilis ilicolin H biosynthetic pathway. The polypeptide is S-adenosyl-L-methionine-dependent Diels-Alderase iliD (Neonectria sp. (strain DH2)).